A 188-amino-acid polypeptide reads, in one-letter code: dCTP deaminase (188 aa).

DCTP is bound by residues K111–R116, T135–E137, Q156, Y170, and Q180. The Proton donor/acceptor role is filled by E137.

This sequence belongs to the dCTP deaminase family. Homotrimer.

It catalyses the reaction dCTP + H2O + H(+) = dUTP + NH4(+). The protein operates within pyrimidine metabolism; dUMP biosynthesis; dUMP from dCTP (dUTP route): step 1/2. Its function is as follows. Catalyzes the deamination of dCTP to dUTP. This Francisella philomiragia subsp. philomiragia (strain ATCC 25017 / CCUG 19701 / FSC 153 / O#319-036) protein is dCTP deaminase.